The following is a 125-amino-acid chain: Allatostatin (125 aa).

An N-terminal signal peptide occupies residues 1 to 26 (MKTSAYNVYLGVVAAMLALLFVTINA). A propeptide spanning residues 27–106 (APMEADDETA…SRLARQWRAD (80 aa)) is cleaved from the precursor. A Pyrrolidone carboxylic acid modification is found at glutamine 109.

The protein belongs to the allatostatin family.

Its subcellular location is the secreted. Strongly inhibits juvenile hormone biosynthesis in vitro by the corpora allata from fifth-stadium larvae and adult females. This is Allatostatin from Spodoptera frugiperda (Fall armyworm).